The following is a 98-amino-acid chain: MSQYNQPPVGVPPPQGYPPEGYPKDAYPPQGYPPQGYPQQGYPPQGYPQQGYPQQGYPPPYAPQYPPPPQHQQQQSSPGFLEGCLAALCCCCLLDACF.

Residues 1 to 77 are disordered; the sequence is MSQYNQPPVG…PPQHQQQQSS (77 aa). The segment covering 9–21 has biased composition (pro residues); that stretch reads VGVPPPQGYPPEG. Low complexity predominate over residues 37 to 55; the sequence is YPQQGYPPQGYPQQGYPQQ. A compositionally biased stretch (pro residues) spans 56–70; it reads GYPPPYAPQYPPPPQ. A helical membrane pass occupies residues 75-92; it reads QSSPGFLEGCLAALCCCC.

The protein belongs to the CYSTM1 family. As to expression, expressed in floral organ primordia.

The protein resides in the membrane. Required for the promotion of megasporogenesis, or promotion of germ cell formation from somatic precursor cells. Acts redundantly with WIH1. Functions in a genetic pathway downstream of SPL/NZZ and WUS and together with TRN2 in promoting megasporogenesis. The protein is Cysteine-rich and transmembrane domain-containing protein WIH2 of Arabidopsis thaliana (Mouse-ear cress).